Reading from the N-terminus, the 216-residue chain is UPF0502 protein Smal_0052 (216 aa).

The protein belongs to the UPF0502 family.

The polypeptide is UPF0502 protein Smal_0052 (Stenotrophomonas maltophilia (strain R551-3)).